Here is a 325-residue protein sequence, read N- to C-terminus: UPF0285 protein MmarC6_0247 (325 aa).

This sequence belongs to the UPF0285 family.

The polypeptide is UPF0285 protein MmarC6_0247 (Methanococcus maripaludis (strain C6 / ATCC BAA-1332)).